A 58-amino-acid polypeptide reads, in one-letter code: Large ribosomal subunit protein uL30 (58 aa).

The protein belongs to the universal ribosomal protein uL30 family. As to quaternary structure, part of the 50S ribosomal subunit.

The sequence is that of Large ribosomal subunit protein uL30 from Novosphingobium aromaticivorans (strain ATCC 700278 / DSM 12444 / CCUG 56034 / CIP 105152 / NBRC 16084 / F199).